The sequence spans 451 residues: D-ribitol-5-phosphate cytidylyltransferase (451 aa).

The interval 1–29 is disordered; it reads MEAGPPGSARPAEPGPCLSGQRGADHTAS.

Belongs to the IspD/TarI cytidylyltransferase family. IspD subfamily. As to quaternary structure, homodimer. Ubiquitously expressed, with high expression in brain.

It is found in the cytoplasm. Its subcellular location is the cytosol. The enzyme catalyses D-ribitol 5-phosphate + CTP + H(+) = CDP-L-ribitol + diphosphate. It catalyses the reaction D-ribose 5-phosphate + CTP + H(+) = CDP-D-ribose + diphosphate. The catalysed reaction is D-ribulose 5-phosphate + CTP + H(+) = CDP-D-ribulose + diphosphate. The protein operates within protein modification; protein glycosylation. Functionally, cytidylyltransferase required for protein O-linked mannosylation. Catalyzes the formation of CDP-ribitol nucleotide sugar from D-ribitol 5-phosphate. CDP-ribitol is a substrate of FKTN during the biosynthesis of the phosphorylated O-mannosyl trisaccharide (N-acetylgalactosamine-beta-3-N-acetylglucosamine-beta-4-(phosphate-6-)mannose), a carbohydrate structure present in alpha-dystroglycan (DAG1), which is required for binding laminin G-like domain-containing extracellular proteins with high affinity. Shows activity toward other pentose phosphate sugars and mediates formation of CDP-ribulose or CDP-ribose using CTP and ribulose-5-phosphate or ribose-5-phosphate, respectively. Not Involved in dolichol production. This chain is D-ribitol-5-phosphate cytidylyltransferase, found in Homo sapiens (Human).